A 203-amino-acid polypeptide reads, in one-letter code: ATP-dependent Clp protease proteolytic subunit 2 (203 aa).

The active-site Nucleophile is the Ser98. Residue His123 is part of the active site.

Belongs to the peptidase S14 family. Fourteen ClpP subunits assemble into 2 heptameric rings which stack back to back to give a disk-like structure with a central cavity, resembling the structure of eukaryotic proteasomes.

The protein resides in the cytoplasm. The catalysed reaction is Hydrolysis of proteins to small peptides in the presence of ATP and magnesium. alpha-casein is the usual test substrate. In the absence of ATP, only oligopeptides shorter than five residues are hydrolyzed (such as succinyl-Leu-Tyr-|-NHMec, and Leu-Tyr-Leu-|-Tyr-Trp, in which cleavage of the -Tyr-|-Leu- and -Tyr-|-Trp bonds also occurs).. Functionally, cleaves peptides in various proteins in a process that requires ATP hydrolysis. Has a chymotrypsin-like activity. Plays a major role in the degradation of misfolded proteins. The sequence is that of ATP-dependent Clp protease proteolytic subunit 2 from Chlamydia trachomatis serovar A (strain ATCC VR-571B / DSM 19440 / HAR-13).